Reading from the N-terminus, the 313-residue chain is Probable cell division protein WhiA (313 aa).

Positions 278–311 (SLKELGKLLDPPLSKSGVNHRLRRIKSIANEIRG) form a DNA-binding region, H-T-H motif.

Belongs to the WhiA family.

Functionally, involved in cell division and chromosome segregation. The sequence is that of Probable cell division protein WhiA from Halothermothrix orenii (strain H 168 / OCM 544 / DSM 9562).